The following is a 66-amino-acid chain: Protein translocase subunit SecE (66 aa).

A helical transmembrane segment spans residues 34-54 (LVVIVAVFVFSLICLVLDYGI).

Belongs to the SecE/SEC61-gamma family. In terms of assembly, component of the Sec protein translocase complex. Heterotrimer consisting of SecY, SecE and SecG subunits. The heterotrimers can form oligomers, although 1 heterotrimer is thought to be able to translocate proteins. Interacts with the ribosome. Interacts with SecDF, and other proteins may be involved. Interacts with SecA.

The protein localises to the cell inner membrane. Functionally, essential subunit of the Sec protein translocation channel SecYEG. Clamps together the 2 halves of SecY. May contact the channel plug during translocation. The chain is Protein translocase subunit SecE from Rickettsia bellii (strain RML369-C).